Consider the following 89-residue polypeptide: Small ribosomal subunit protein bS20 (89 aa).

The segment covering 1–11 (MANIKSQIKRN) has biased composition (polar residues). Residues 1 to 22 (MANIKSQIKRNLTNEKRRLRNK) are disordered.

It belongs to the bacterial ribosomal protein bS20 family.

Binds directly to 16S ribosomal RNA. The sequence is that of Small ribosomal subunit protein bS20 from Frankia casuarinae (strain DSM 45818 / CECT 9043 / HFP020203 / CcI3).